Reading from the N-terminus, the 138-residue chain is Nucleoside diphosphate kinase (138 aa).

6 residues coordinate ATP: lysine 9, phenylalanine 57, arginine 85, threonine 91, arginine 102, and asparagine 112. Histidine 115 acts as the Pros-phosphohistidine intermediate in catalysis.

The protein belongs to the NDK family. The cofactor is Mg(2+).

It is found in the cytoplasm. It carries out the reaction a 2'-deoxyribonucleoside 5'-diphosphate + ATP = a 2'-deoxyribonucleoside 5'-triphosphate + ADP. It catalyses the reaction a ribonucleoside 5'-diphosphate + ATP = a ribonucleoside 5'-triphosphate + ADP. Its function is as follows. Major role in the synthesis of nucleoside triphosphates other than ATP. The ATP gamma phosphate is transferred to the NDP beta phosphate via a ping-pong mechanism, using a phosphorylated active-site intermediate. This chain is Nucleoside diphosphate kinase, found in Picrophilus torridus (strain ATCC 700027 / DSM 9790 / JCM 10055 / NBRC 100828 / KAW 2/3).